The following is a 125-amino-acid chain: Small ribosomal subunit protein uS12m (125 aa).

Positions 1–50 (MPSLNQLIRHGREEKRRTDRTRALDQCPQKQGVCPRVSTRTPKKPNSAPR) are disordered. The span at 10 to 23 (HGREEKRRTDRTRA) shows a compositional bias: basic and acidic residues.

This sequence belongs to the universal ribosomal protein uS12 family.

The protein localises to the mitochondrion. In terms of biological role, protein S12 is involved in the translation initiation step. In Petunia hybrida (Petunia), this protein is Small ribosomal subunit protein uS12m (RPS12).